A 201-amino-acid polypeptide reads, in one-letter code: Small ribosomal subunit protein uS4c (201 aa).

Positions 15 to 43 (LGALPGLTNKRPRAGSDLRNQSRSGKRSQ) are disordered. The S4 RNA-binding domain maps to 89 to 149 (MRLDNILFRL…DEQKSIALIQ (61 aa)).

In terms of assembly, component of the chloroplast small ribosomal subunit (SSU). Mature 70S chloroplast ribosomes of higher plants consist of a small (30S) and a large (50S) subunit. The 30S small subunit contains 1 molecule of ribosomal RNA (16S rRNA) and 24 different proteins. The 50S large subunit contains 3 rRNA molecules (23S, 5S and 4.5S rRNA) and 33 different proteins.

It is found in the plastid. It localises to the chloroplast. Component of the chloroplast ribosome (chloro-ribosome), a dedicated translation machinery responsible for the synthesis of chloroplast genome-encoded proteins, including proteins of the transcription and translation machinery and components of the photosynthetic apparatus. The sequence is that of Small ribosomal subunit protein uS4c (rps4) from Spinacia oleracea (Spinach).